The sequence spans 454 residues: Aminodeoxychorismate synthase component 1 (454 aa).

Residues Ser37, 44-47, and 241-243 each bind L-tryptophan; these read YNRF and PFS. The Proton donor role is filled by Glu259. The N6-(4-deoxychorismate)-lysine intermediate role is filled by Lys275.

The protein belongs to the anthranilate synthase component I family. In terms of assembly, monomer. Heterodimer consisting of two non-identical subunits: a glutamine amidotransferase subunit (PabA) and a aminodeoxychorismate synthase subunit (PabB). Mg(2+) serves as cofactor.

It catalyses the reaction chorismate + L-glutamine = 4-amino-4-deoxychorismate + L-glutamate. The protein operates within cofactor biosynthesis; tetrahydrofolate biosynthesis; 4-aminobenzoate from chorismate: step 1/2. Functionally, part of a heterodimeric complex that catalyzes the two-step biosynthesis of 4-amino-4-deoxychorismate (ADC), a precursor of p-aminobenzoate (PABA) and tetrahydrofolate. In the first step, a glutamine amidotransferase (PabA) generates ammonia as a substrate that, along with chorismate, is used in the second step, catalyzed by aminodeoxychorismate synthase (PabB) to produce ADC. This Salmonella typhimurium (strain LT2 / SGSC1412 / ATCC 700720) protein is Aminodeoxychorismate synthase component 1 (pabB).